A 319-amino-acid polypeptide reads, in one-letter code: 7,8-didemethyl-8-hydroxy-5-deazariboflavin synthase (319 aa).

Residues 6-236 form the Radical SAM core domain; sequence VTYSPAFTLV…AEITIQIPPN (231 aa). [4Fe-4S] cluster contacts are provided by Cys20, Cys24, and Cys27.

The protein belongs to the radical SAM superfamily. CofG family. Consists of two subunits, CofG and CofH. [4Fe-4S] cluster is required as a cofactor.

The enzyme catalyses 5-amino-5-(4-hydroxybenzyl)-6-(D-ribitylimino)-5,6-dihydrouracil + S-adenosyl-L-methionine = 7,8-didemethyl-8-hydroxy-5-deazariboflavin + 5'-deoxyadenosine + L-methionine + NH4(+) + H(+). The protein operates within cofactor biosynthesis; coenzyme F0 biosynthesis. Catalyzes the radical-mediated synthesis of 7,8-didemethyl-8-hydroxy-5-deazariboflavin from 5-amino-5-(4-hydroxybenzyl)-6-(D-ribitylimino)-5,6-dihydrouracil. The sequence is that of 7,8-didemethyl-8-hydroxy-5-deazariboflavin synthase from Gloeobacter violaceus (strain ATCC 29082 / PCC 7421).